A 633-amino-acid chain; its full sequence is MTTPKKTAKISGNEARELSDLSEDIGIRFKYQNSERVYLQGSRDDIRVPLREIRQDDTYTAQGTEANPPIPVYDTSGAYGDPAAHIDLKQGLPHIRTAWLDERGDTEILPKLSSEYGIERAHDPKTAHLRFNQITRPRRAKAGRNVTQLHYARQGIITPEMEFAAIRERMKLDELFRRPEYAKLLKQHTGQSFGANIPTRPDQITPEFVRQEIAAGRAIIPANINHPELEPMIIGRNFRVKINGNLGNSAVTSSLTEEVEKMVWSLRWGADTIMDLSTGAHIHETREWIIRNAPVPIGTVPIYQTLEKTGGIAEDLTWDLFRDTLIEQAEQGVDYFTIHAGVLLRYVPMTANRLTGIVSRGGSIMAKWCLAHHRENFLYTHFDEICEIMKAYDVSFSLGDGLRPGCIADANDESQFAELHTLGELTDKAWKHDVQVMIEGPGHVPLQRVKENMTEELQHCFEAPFYTLGPLVTDIAPGYDHITSGIGAANIGWYGTAMLCYVTPKEHLGLPDKEDVRTGIITYKLAAHAADLAKGWPGAQLRDNALSKARFEFRWRDQFRLSLDPERAESFHDETLPAEGAKIAHFCSMCGPKFCSMKITQEVRDYADKQKAQRQGMEEKAVEFVKKGAKIYS.

Substrate is bound by residues N245, M274, Y303, H339, 359–361 (SRG), 400–403 (DGLR), and E439. H443 is a binding site for Zn(2+). Y466 is a binding site for substrate. Position 507 (H507) interacts with Zn(2+). [4Fe-4S] cluster contacts are provided by C587, C590, and C595.

Belongs to the ThiC family. As to quaternary structure, homodimer. [4Fe-4S] cluster is required as a cofactor.

The enzyme catalyses 5-amino-1-(5-phospho-beta-D-ribosyl)imidazole + S-adenosyl-L-methionine = 4-amino-2-methyl-5-(phosphooxymethyl)pyrimidine + CO + 5'-deoxyadenosine + formate + L-methionine + 3 H(+). Its pathway is cofactor biosynthesis; thiamine diphosphate biosynthesis. Catalyzes the synthesis of the hydroxymethylpyrimidine phosphate (HMP-P) moiety of thiamine from aminoimidazole ribotide (AIR) in a radical S-adenosyl-L-methionine (SAM)-dependent reaction. This chain is Phosphomethylpyrimidine synthase, found in Neisseria gonorrhoeae (strain ATCC 700825 / FA 1090).